We begin with the raw amino-acid sequence, 103 residues long: Small ribosomal subunit protein bS18 (103 aa).

Residues 1–19 are compositionally biased toward basic and acidic residues; it reads MSEERTERPERTERPERPQ. Residues 1–33 form a disordered region; sequence MSEERTERPERTERPERPQQRGSGPRKRRPFQR. The span at 24 to 33 shows a compositional bias: basic residues; it reads GPRKRRPFQR.

This sequence belongs to the bacterial ribosomal protein bS18 family. Part of the 30S ribosomal subunit. Forms a tight heterodimer with protein bS6.

In terms of biological role, binds as a heterodimer with protein bS6 to the central domain of the 16S rRNA, where it helps stabilize the platform of the 30S subunit. In Geobacter sulfurreducens (strain ATCC 51573 / DSM 12127 / PCA), this protein is Small ribosomal subunit protein bS18.